Consider the following 560-residue polypeptide: 2-succinyl-5-enolpyruvyl-6-hydroxy-3-cyclohexene-1-carboxylate synthase (560 aa).

The protein belongs to the TPP enzyme family. MenD subfamily. Homodimer. The cofactor is Mg(2+). Requires Mn(2+) as cofactor. Thiamine diphosphate serves as cofactor.

It carries out the reaction isochorismate + 2-oxoglutarate + H(+) = 5-enolpyruvoyl-6-hydroxy-2-succinyl-cyclohex-3-ene-1-carboxylate + CO2. It functions in the pathway quinol/quinone metabolism; 1,4-dihydroxy-2-naphthoate biosynthesis; 1,4-dihydroxy-2-naphthoate from chorismate: step 2/7. It participates in quinol/quinone metabolism; menaquinone biosynthesis. Catalyzes the thiamine diphosphate-dependent decarboxylation of 2-oxoglutarate and the subsequent addition of the resulting succinic semialdehyde-thiamine pyrophosphate anion to isochorismate to yield 2-succinyl-5-enolpyruvyl-6-hydroxy-3-cyclohexene-1-carboxylate (SEPHCHC). In Pectobacterium atrosepticum (strain SCRI 1043 / ATCC BAA-672) (Erwinia carotovora subsp. atroseptica), this protein is 2-succinyl-5-enolpyruvyl-6-hydroxy-3-cyclohexene-1-carboxylate synthase.